The sequence spans 549 residues: Probable protein kinase UbiB (549 aa).

The region spanning 123–501 (DFNETPLASA…QQQAHKSNYL (379 aa)) is the Protein kinase domain. Residues 129-137 (LASASISQV) and Lys-152 contribute to the ATP site. The Proton acceptor role is filled by Asp-287. Transmembrane regions (helical) follow at residues 496–516 (HKSNYLLITSAVLLICGTLLI) and 520–540 (ATLWTPYVCLVSGIILWFVGW).

The protein belongs to the ABC1 family. UbiB subfamily.

It localises to the cell inner membrane. The protein operates within cofactor biosynthesis; ubiquinone biosynthesis [regulation]. Functionally, is probably a protein kinase regulator of UbiI activity which is involved in aerobic coenzyme Q (ubiquinone) biosynthesis. The sequence is that of Probable protein kinase UbiB from Shewanella baltica (strain OS185).